Reading from the N-terminus, the 348-residue chain is Phosphate acyltransferase (348 aa).

This sequence belongs to the PlsX family. In terms of assembly, homodimer. Probably interacts with PlsY.

The protein resides in the cytoplasm. It carries out the reaction a fatty acyl-[ACP] + phosphate = an acyl phosphate + holo-[ACP]. It functions in the pathway lipid metabolism; phospholipid metabolism. Its function is as follows. Catalyzes the reversible formation of acyl-phosphate (acyl-PO(4)) from acyl-[acyl-carrier-protein] (acyl-ACP). This enzyme utilizes acyl-ACP as fatty acyl donor, but not acyl-CoA. This Francisella tularensis subsp. novicida (strain U112) protein is Phosphate acyltransferase.